Here is a 75-residue protein sequence, read N- to C-terminus: Penaeidin-3l (75 aa).

The signal sequence occupies residues 1-19; it reads MRLVVCLVFLASFALVCQG. Pyrrolidone carboxylic acid is present on glutamine 20. Cystine bridges form between cysteine 44-cysteine 59, cysteine 48-cysteine 66, and cysteine 60-cysteine 67. Serine 74 carries the post-translational modification Serine amide.

It belongs to the penaeidin family.

The protein localises to the cytoplasmic granule. Its function is as follows. Antibacterial and antifungal activity. Presents chitin-binding activity. The chain is Penaeidin-3l from Penaeus setiferus (Atlantic white shrimp).